An 86-amino-acid polypeptide reads, in one-letter code: Omega-theraphotoxin-Hhn1a 1 (86 aa).

The first 21 residues, 1–21, serve as a signal peptide directing secretion; sequence MKSIVFVALFGLALLAVVCSA. Positions 22-50 are excised as a propeptide; sequence SEDAHKELLKEVVRAMVVDKTDAVQAEER. 3 cysteine pairs are disulfide-bonded: Cys52/Cys66, Cys59/Cys71, and Cys65/Cys78.

It belongs to the neurotoxin 10 (Hwtx-1) family. 17 (Hntx-9) subfamily. As to expression, expressed by the venom gland.

It localises to the secreted. Its function is as follows. Ion channel inhibitor. This chain is Omega-theraphotoxin-Hhn1a 1, found in Cyriopagopus hainanus (Chinese bird spider).